The sequence spans 549 residues: Tight junction-associated protein 1 (549 aa).

The interval Met1 to Glu34 is disordered. Over residues Ala14–Leu23 the composition is skewed to basic and acidic residues. The stretch at Met42–Asp171 forms a coiled coil. Disordered regions lie at residues Arg207 to Gly226 and Val266 to Pro322. A Phosphoserine modification is found at Ser295. A compositionally biased stretch (pro residues) spans Tyr311–Leu320. Thr313 is modified (phosphothreonine). A phosphoserine mark is found at Ser315 and Ser340. Disordered stretches follow at residues Glu359–Asp404, Gln410–Phe429, and Leu434–Ser549. Residues Ser369–His383 show a composition bias toward polar residues. Over residues Pro389 to Ser400 the composition is skewed to low complexity. The residue at position 417 (Thr417) is a Phosphothreonine. Position 483 is a phosphoserine (Ser483). The segment covering Glu485 to Thr498 has biased composition (basic and acidic residues). Positions Arg522–Arg534 are enriched in basic residues. The residue at position 537 (Ser537) is a Phosphoserine. Over residues Leu538–Ser549 the composition is skewed to polar residues.

As to quaternary structure, interacts with DLG1. Interacts with ARF6 (GTP-bound form). In terms of tissue distribution, widely expressed including in adult thymus, heart, lung, liver, small intestine, kidney, spleen, testis and skeletal muscle and in embryonic brain but not detected in adult brain (at protein level).

The protein localises to the golgi apparatus. Its subcellular location is the trans-Golgi network. The protein resides in the cell junction. It localises to the tight junction. It is found in the cell membrane. Plays a role in regulating the structure of the Golgi apparatus. This Mus musculus (Mouse) protein is Tight junction-associated protein 1.